We begin with the raw amino-acid sequence, 247 residues long: NCT transcriptional regulatory complex subunit A (247 aa).

Basic and acidic residues predominate over residues 1 to 12 (MTDQDSTYRPRS). Disordered regions lie at residues 1–31 (MTDQDSTYRPRSPDLSTFQSSIPPAVNSPIY), 48–82 (FFAPQYQQPPAPLGRVPQQYIPPFVDPNSPLSPDM), and 212–247 (VPDQPAGGRKHDDDGSDQNEQPKRKRGGRRPKDDSD). Positions 13–22 (PDLSTFQSSI) are enriched in polar residues.

It belongs to the NC2 alpha/DRAP1 family. Forms the NCT transcriptional regulatory complex with nctB and mot1.

It localises to the nucleus. In terms of biological role, part of the NCT transcriptional regulatory complex that acts as a key regulator of ergosterol biosynthesis and the azole exporter cdr1B. The NCT complex binds the promoters of genes linked to azole susceptibility, and especially represses the expression of cdr1B transporter. The protein is NCT transcriptional regulatory complex subunit A of Aspergillus fumigatus (strain CBS 144.89 / FGSC A1163 / CEA10) (Neosartorya fumigata).